The chain runs to 152 residues: uncharacterized protein (152 aa).

One can recognise a VOC domain in the interval 7–133 (PALSPHLVVD…FGHHWSLGQP (127 aa)).

This is an uncharacterized protein from Mycobacterium bovis (strain ATCC BAA-935 / AF2122/97).